A 125-amino-acid polypeptide reads, in one-letter code: Small ribosomal subunit protein eS6 (125 aa).

The protein belongs to the eukaryotic ribosomal protein eS6 family.

This Pyrococcus horikoshii (strain ATCC 700860 / DSM 12428 / JCM 9974 / NBRC 100139 / OT-3) protein is Small ribosomal subunit protein eS6.